A 424-amino-acid polypeptide reads, in one-letter code: uncharacterized protein (424 aa).

Lys-259 carries the N6-(pyridoxal phosphate)lysine modification.

The protein belongs to the class-III pyridoxal-phosphate-dependent aminotransferase family. It depends on pyridoxal 5'-phosphate as a cofactor.

This is an uncharacterized protein from Archaeoglobus fulgidus (strain ATCC 49558 / DSM 4304 / JCM 9628 / NBRC 100126 / VC-16).